The following is a 398-amino-acid chain: uncharacterized protein (398 aa).

N6-(pyridoxal phosphate)lysine is present on Lys-212.

Belongs to the trans-sulfuration enzymes family. It depends on pyridoxal 5'-phosphate as a cofactor.

This is an uncharacterized protein from Schizosaccharomyces pombe (strain 972 / ATCC 24843) (Fission yeast).